The sequence spans 131 residues: Small nuclear ribonucleoprotein SmD3b (131 aa).

Residues 7-79 form the Sm domain; sequence IPVKLLHEAS…VRFMVIPDIL (73 aa). Residues 96–131 are disordered; that stretch reads SSSLGVGRGRGAMRGKPAAGPGRGTGGRGAVPPVRR.

This sequence belongs to the snRNP core protein family. Expressed in young seedlings, roots, leaves, flowers and immature siliques.

The protein localises to the cytoplasm. The protein resides in the cytosol. It is found in the nucleus. In terms of biological role, core component of the spliceosomal U1, U2, U4 and U5 small nuclear ribonucleoproteins (snRNPs), the building blocks of the spliceosome. May play a major role in the splicing of cellular pre-mRNAs. Required for normal plant development. The polypeptide is Small nuclear ribonucleoprotein SmD3b (Arabidopsis thaliana (Mouse-ear cress)).